The sequence spans 359 residues: Glycerol-1-phosphate dehydrogenase [NAD(P)+] (359 aa).

NAD(+) is bound by residues 107–111 (GRVID) and 129–132 (TAAS). Aspartate 134 contacts substrate. Position 138 (serine 138) interacts with NAD(+). Aspartate 181 provides a ligand contact to substrate. Positions 181 and 261 each coordinate Zn(2+). Histidine 265 contributes to the substrate binding site. Histidine 277 serves as a coordination point for Zn(2+).

It belongs to the glycerol-1-phosphate dehydrogenase family. It depends on Zn(2+) as a cofactor.

The protein localises to the cytoplasm. The catalysed reaction is sn-glycerol 1-phosphate + NAD(+) = dihydroxyacetone phosphate + NADH + H(+). It carries out the reaction sn-glycerol 1-phosphate + NADP(+) = dihydroxyacetone phosphate + NADPH + H(+). Its pathway is membrane lipid metabolism; glycerophospholipid metabolism. Functionally, catalyzes the NAD(P)H-dependent reduction of dihydroxyacetonephosphate (DHAP or glycerone phosphate) to glycerol 1-phosphate (G1P). The G1P thus generated is used as the glycerophosphate backbone of phospholipids in the cellular membranes of Archaea. The polypeptide is Glycerol-1-phosphate dehydrogenase [NAD(P)+] (Methanospirillum hungatei JF-1 (strain ATCC 27890 / DSM 864 / NBRC 100397 / JF-1)).